Here is a 540-residue protein sequence, read N- to C-terminus: 2,3-bisphosphoglycerate-independent phosphoglycerate mutase (540 aa).

The Mn(2+) site is built by Asp13 and Ser63. Ser63 acts as the Phosphoserine intermediate in catalysis. Substrate-binding positions include His124, 154–155, Arg186, Arg192, 262–265, and Lys356; these read RD and RPDR. Mn(2+) is bound by residues Asp423, His427, Asp464, His465, and His483.

Belongs to the BPG-independent phosphoglycerate mutase family. In terms of assembly, monomer. Mn(2+) serves as cofactor.

The catalysed reaction is (2R)-2-phosphoglycerate = (2R)-3-phosphoglycerate. It functions in the pathway carbohydrate degradation; glycolysis; pyruvate from D-glyceraldehyde 3-phosphate: step 3/5. Functionally, catalyzes the interconversion of 2-phosphoglycerate and 3-phosphoglycerate. This is 2,3-bisphosphoglycerate-independent phosphoglycerate mutase from Chloroflexus aurantiacus (strain ATCC 29366 / DSM 635 / J-10-fl).